The primary structure comprises 377 residues: MSRGIIIIGSGFAARQLVKNIRKQDAHVPLTLIAADSMDEYNKPDLSHVISQSQRADDLNRQLAGEFAEQFNLRLFPHTWVADIDADAHVVKSQDKQWQYDKLVLATGAAAFVPPIAGRELMLTLNSQQEYRACETQLRDAQRVLIVGGGLIGSELAMDLCRAGKTVTLMDNAASLLASLMPPEVSSRLQHHLTDMGVHLLLKSQLQKLEKTEAGIRATLVSQHSIEVDAVIAATGLRPETALARRAGVAVNRGVCVDSYLQTSHPDIYAIGDCAEINGQVLPFLQPIQLSAMYLAKNLLGGNAPLKLPAMLVKVKTPELPLHLAGETQRSDLSWQITAESDGMIAKGMSGEGQLRAFVVSEDRMKEAFALLKTLSV.

It belongs to the FAD-dependent oxidoreductase family. It depends on FAD as a cofactor.

It is found in the cytoplasm. The catalysed reaction is 2 reduced [nitric oxide reductase rubredoxin domain] + NAD(+) + H(+) = 2 oxidized [nitric oxide reductase rubredoxin domain] + NADH. It participates in nitrogen metabolism; nitric oxide reduction. Its function is as follows. One of at least two accessory proteins for anaerobic nitric oxide (NO) reductase. Reduces the rubredoxin moiety of NO reductase. The sequence is that of Nitric oxide reductase FlRd-NAD(+) reductase from Salmonella gallinarum (strain 287/91 / NCTC 13346).